Consider the following 139-residue polypeptide: D-ribose pyranase (139 aa).

H20 serves as the catalytic Proton donor. Substrate-binding positions include D28, H106, and 128–130 (YAN).

This sequence belongs to the RbsD / FucU family. RbsD subfamily. As to quaternary structure, homodecamer.

It localises to the cytoplasm. It catalyses the reaction beta-D-ribopyranose = beta-D-ribofuranose. It functions in the pathway carbohydrate metabolism; D-ribose degradation; D-ribose 5-phosphate from beta-D-ribopyranose: step 1/2. Functionally, catalyzes the interconversion of beta-pyran and beta-furan forms of D-ribose. This Aliivibrio fischeri (strain MJ11) (Vibrio fischeri) protein is D-ribose pyranase.